The following is a 337-amino-acid chain: Neurogenic differentiation factor 6 (337 aa).

The disordered stretch occupies residues 28–80 (QKQIKKPESFPKQVVLRGKSIKRAPGEETEKEEEEEDREEEDENGLSRRRGLR). Over residues 54–71 (EETEKEEEEEDREEEDEN) the composition is skewed to acidic residues. The Nuclear localization signal motif lies at 80–86 (RKKKTTK). The region spanning 94 to 146 (FRRQEANARERNRMHGLNDALDNLRKVVPCYSKTQKLSKIETLRLAKNYIWAL) is the bHLH domain.

As to quaternary structure, efficient DNA binding requires dimerization with another bHLH protein. Specific to the nervous system of both embryos and adults. Highest levels in the cortical plate of the cerebrum.

It is found in the nucleus. Activates E box-dependent transcription in collaboration with TCF3/E47. May be a trans-acting factor involved in the development and maintenance of the mammalian nervous system. Transactivates the promoter of its own gene. The sequence is that of Neurogenic differentiation factor 6 (Neurod6) from Mus musculus (Mouse).